Reading from the N-terminus, the 468-residue chain is Alpha-2A adrenergic receptor (468 aa).

Residues Met1–Thr48 lie on the Extracellular side of the membrane. Residues Asn25 and Asn29 are each glycosylated (N-linked (GlcNAc...) asparagine). A helical membrane pass occupies residues Leu49–Phe74. Residues Thr75–Leu85 are Cytoplasmic-facing. The helical transmembrane segment at Phe86–Met111 threads the bilayer. The Extracellular segment spans residues Gly112–Cys121. Cys121 and Cys203 form a disulfide bridge. The chain crosses the membrane as a helical span at residues Glu122–Leu144. The Cytoplasmic portion of the chain corresponds to Asp145–Arg164. Residues Ile165 to Glu188 form a helical membrane-spanning segment. The Extracellular segment spans residues Lys189–Asp207. The chain crosses the membrane as a helical span at residues Gln208–Val232. The Cytoplasmic portion of the chain corresponds to Arg233–Phe392. 2 disordered regions span residues Thr242–Val279 and Asn291–Arg381. The span at Ser315–Pro332 shows a compositional bias: basic and acidic residues. Position 348 is a phosphoserine (Ser348). A compositionally biased stretch (low complexity) spans Arg351–Pro366. Position 370 is an omega-N-methylarginine (Arg370). A helical membrane pass occupies residues Val393–Ile417. Topologically, residues Gly418–Lys427 are extracellular. Residues Phe428–Asn448 traverse the membrane as a helical segment. Over His449–Val468 the chain is Cytoplasmic. Cys460 carries S-palmitoyl cysteine lipidation.

Belongs to the G-protein coupled receptor 1 family. Adrenergic receptor subfamily. ADRA2A sub-subfamily. In terms of assembly, component of the ADA2A-containing complex (ATAC), composed of KAT14, KAT2A, TADA2L, TADA3L, ZZ3, MBIP, WDR5, YEATS2, CCDC101 and DR1. As to expression, retina, brain and olfactory lobe.

The protein localises to the cell membrane. Functionally, alpha-2 adrenergic receptors mediate the catecholamine-induced inhibition of adenylate cyclase through the action of G proteins. Component of the ATAC complex, a complex with histone acetyltransferase activity on histones H3 and H4. The chain is Alpha-2A adrenergic receptor from Bos taurus (Bovine).